Here is a 575-residue protein sequence, read N- to C-terminus: Guanine nucleotide-binding protein-like 3-like protein (575 aa).

Residues 1–30 (MMKLRHKNKKPGKGSKGCKKPAKQNGKKAA) are compositionally biased toward basic residues. Residues 1-75 (MMKLRHKNKK…AAREQERHRR (75 aa)) are disordered. The interval 9-28 (KKPGKGSKGCKKPAKQNGKK) is required for nucleolar localization. A compositionally biased stretch (basic and acidic residues) spans 42–72 (SNDHASREAELKKKRVGEMREKQQAAREQER). Residues 51–79 (ELKKKRVGEMREKQQAAREQERHRRRTIE) adopt a coiled-coil conformation. The region spanning 118 to 303 (YKEFHKVVEY…LLDAPGIVPG (186 aa)) is the CP-type G domain. Residues 166–169 (NKID), 252–259 (GLPNVGKS), and 296–299 (DAPG) contribute to the GTP site. A Glycyl lysine isopeptide (Lys-Gly) (interchain with G-Cter in SUMO1) cross-link involves residue Lys-470.

This sequence belongs to the TRAFAC class YlqF/YawG GTPase family. In terms of assembly, interacts with MDM2; this interaction, which occurs in the nucleoplasm, stabilizes MDM2. Indirectly interacts with TP53, via MDM2-binding. Interacts with TERF1; this interaction probably occurs in the nucleoplasm and is increased during mitosis, when the nucleolus is disassembled. This binding may promote TERF1 homodimerization. Interacts with TERT.

The protein resides in the nucleus. It localises to the nucleolus. Stabilizes TERF1 telomeric association by preventing TERF1 recruitment by PML. Stabilizes TERF1 protein by preventing its ubiquitination and hence proteasomal degradation. Does so by interfering with TERF1-binding to FBXO4 E3 ubiquitin-protein ligase. Required for cell proliferation. By stabilizing TRF1 protein during mitosis, promotes metaphase-to-anaphase transition. Stabilizes MDM2 protein by preventing its ubiquitination, and hence proteasomal degradation. By acting on MDM2, may affect TP53 activity. Required for normal processing of ribosomal pre-rRNA. Binds GTP. This chain is Guanine nucleotide-binding protein-like 3-like protein (GNL3L), found in Bos taurus (Bovine).